The chain runs to 157 residues: Ciliary microtubule inner protein 5 (157 aa).

Disordered regions lie at residues 1–57 and 92–124; these read MGSR…SALG and DPMG…AVGS. Positions 92 to 109 are enriched in basic and acidic residues; that stretch reads DPMGNKKEPVKLPDHVPR.

The protein resides in the cell projection. The protein localises to the cilium. The protein is Ciliary microtubule inner protein 5 (CIMIP5) of Bos taurus (Bovine).